Here is a 133-residue protein sequence, read N- to C-terminus: NAD(P)H-quinone oxidoreductase subunit 3 (133 aa).

3 consecutive transmembrane segments (helical) span residues 22–44 (YLLGFLLISSLVPILSLTASRLL), 77–97 (MFALVFVIFDVETVFLYPWAV), and 102–122 (LGLLAFVEALIFITILVVGLA).

Belongs to the complex I subunit 3 family. As to quaternary structure, NDH-1 can be composed of about 15 different subunits; different subcomplexes with different compositions have been identified which probably have different functions.

Its subcellular location is the cellular thylakoid membrane. The enzyme catalyses a plastoquinone + NADH + (n+1) H(+)(in) = a plastoquinol + NAD(+) + n H(+)(out). It carries out the reaction a plastoquinone + NADPH + (n+1) H(+)(in) = a plastoquinol + NADP(+) + n H(+)(out). In terms of biological role, NDH-1 shuttles electrons from an unknown electron donor, via FMN and iron-sulfur (Fe-S) centers, to quinones in the respiratory and/or the photosynthetic chain. The immediate electron acceptor for the enzyme in this species is believed to be plastoquinone. Couples the redox reaction to proton translocation, and thus conserves the redox energy in a proton gradient. Cyanobacterial NDH-1 also plays a role in inorganic carbon-concentration. This Synechococcus sp. (strain ATCC 27144 / PCC 6301 / SAUG 1402/1) (Anacystis nidulans) protein is NAD(P)H-quinone oxidoreductase subunit 3.